Consider the following 162-residue polypeptide: FCS-Like Zinc finger 6 (162 aa).

Disordered stretches follow at residues 25-47 (NLPS…YGSN) and 121-162 (RQEQ…AAAV). The span at 27-47 (PSESEPSNQQKPTVASPYGSN) shows a compositional bias: polar residues. An FLZ-type zinc finger spans residues 88-132 (HFLRSCALCERLLVPGRDIYMYRGDKAFCSSECRQEQMAQDERKE). Residues 147 to 162 (APARAKPGKGRAAAAV) are compositionally biased toward low complexity.

Belongs to the FLZ family. In terms of assembly, interacts with KIN10 and KIN11 via its FLZ-type zinc finger domain. As to expression, early expressed in hypocotyl and cotyledon. Later expressed in old or senescing leaves and in pistil, pollen and filament of open flowers.

Its subcellular location is the nucleus. The protein resides in the cytoplasm. The protein localises to the endoplasmic reticulum. May act as an adapter to facilitate the interaction of SnRK1 complex with effector proteins, conferring tissue- and stimulus-type specific differences in the SnRK1 regulation pathway. Negatively regulates KIN10 leading to a repression of the SnRK1 signaling pathway. This chain is FCS-Like Zinc finger 6, found in Arabidopsis thaliana (Mouse-ear cress).